We begin with the raw amino-acid sequence, 314 residues long: 3'-5' exoribonuclease YhaM (314 aa).

An HD domain is found at 163 to 279 (HVVSMLDLAK…LHYIDNLDAK (117 aa)).

This sequence belongs to the YhaM family.

Functionally, shows a 3'-5' exoribonuclease activity. The polypeptide is 3'-5' exoribonuclease YhaM (Bacillus cereus (strain 03BB102)).